A 331-amino-acid polypeptide reads, in one-letter code: Nacrein-like protein P1 (331 aa).

The 331-residue stretch at 1–331 (QSPINIVSYD…LHALRNVEGY (331 aa)) folds into the Alpha-carbonic anhydrase domain. Residues His-69, His-71, and His-94 each contribute to the Zn(2+) site. The tract at residues 138-240 (DEPDDEECKR…GENGHKHGCR (103 aa)) is disordered. Positions 144 to 156 (ECKRILKGHHPDN) are enriched in basic and acidic residues. Positions 157 to 232 (NENGNGDNGN…NNGENGNNGE (76 aa)) are enriched in low complexity. 24 tandem repeats follow at residues 162–164 (GDN), 165–167 (GNN), 168–170 (GYN), 171–173 (GDN), 174–176 (GNN), 177–179 (GDN), 180–182 (GNN), 183–185 (GYN), 186–188 (GDN), 189–191 (GNN), 192–194 (GDN), 195–197 (GNN), 198–200 (GYN), 201–203 (GDN), 204–206 (GNN), 207–209 (GDN), 210–212 (GNN), 213–215 (GEN), 216–218 (GNN), 219–221 (GEN), 222–224 (GNN), 225–227 (GEN), 228–229 (GN), and 231–233 (GEN). The segment at 162–233 (GDNGNNGYNG…NGENGNNGEN (72 aa)) is 24 X 3 AA approximate tandem repeats of G-X-N. 298–299 (TT) is a substrate binding site.

It belongs to the alpha-carbonic anhydrase family. As to quaternary structure, homooligomer; disulfide-linked. May also be disulfide-linked to insoluble organic matrix. Zn(2+) serves as cofactor. Expressed in the mantle.

The protein localises to the secreted. The protein resides in the extracellular space. It localises to the extracellular matrix. It carries out the reaction hydrogencarbonate + H(+) = CO2 + H2O. In terms of biological role, acts as a negative regulator for calcification in the shells of mollusks. May function both as a calcium concentrator and as a carbonic anhydrase required for production of carbonate ions, which are assembled to CaCO(3) at mineralization sites. Is important for shell formation in both the calcitic prismatic layer and the aragonitic nacreous layer. Shows inhibitory activity of crystal formation when present in free state but, when attached to the insoluble matrix, may regulate the form and size of aragonite crystal. The protein is Nacrein-like protein P1 of Mizuhopecten yessoensis (Japanese scallop).